The primary structure comprises 609 residues: tRNA uridine 5-carboxymethylaminomethyl modification enzyme MnmG (609 aa).

FAD-binding positions include 11 to 16, valine 123, and threonine 178; that span reads GAGHAG. Residue 270 to 284 coordinates NAD(+); it reads GPRYCPSIEDKVVRF. Glutamine 367 lines the FAD pocket.

The protein belongs to the MnmG family. As to quaternary structure, homodimer. Heterotetramer of two MnmE and two MnmG subunits. FAD is required as a cofactor.

It is found in the cytoplasm. Its function is as follows. NAD-binding protein involved in the addition of a carboxymethylaminomethyl (cmnm) group at the wobble position (U34) of certain tRNAs, forming tRNA-cmnm(5)s(2)U34. This chain is tRNA uridine 5-carboxymethylaminomethyl modification enzyme MnmG, found in Mycoplasmopsis synoviae (strain 53) (Mycoplasma synoviae).